Here is a 178-residue protein sequence, read N- to C-terminus: uncharacterized protein (178 aa).

This sequence belongs to the mimivirus L114/R131 family.

This is an uncharacterized protein from Acanthamoeba polyphaga mimivirus (APMV).